A 379-amino-acid polypeptide reads, in one-letter code: Odorant receptor 23a (379 aa).

The Cytoplasmic segment spans residues 1-36; it reads MKLSETLKIDYFRVQLNAWRICGALDLSEGRYWSWS. A helical membrane pass occupies residues 37–57; that stretch reads MLLCILVYLPTPMLLRGVYSF. Residues 58–64 lie on the Extracellular side of the membrane; it reads EDPVENN. Residue asparagine 64 is glycosylated (N-linked (GlcNAc...) asparagine). Residues 65-85 form a helical membrane-spanning segment; that stretch reads FSLSLTVTSLSNLMKFCMYVA. Over 86–125 the chain is Cytoplasmic; sequence QLTKMVEVQSLIGQLDARVSGESQSERHRNMTEHLLRMSK. Residues 126 to 146 traverse the membrane as a helical segment; it reads LFQITYAVVFIIAAVPFVFET. Residues 147 to 162 lie on the Extracellular side of the membrane; sequence ELSLPMPMWFPFDWKN. A helical membrane pass occupies residues 163-183; sequence SMVAYIGALVFQEIGYVFQIM. Over 184 to 253 the chain is Cytoplasmic; the sequence is QCFAADSFPP…TKSLVSYPMM (70 aa). The helical transmembrane segment at 254–274 threads the bilayer; it reads VQFMVIGINIAITLFVLIFYV. Topologically, residues 275-280 are extracellular; sequence ETLYDR. The chain crosses the membrane as a helical span at residues 281-301; it reads IYYLCFLLGITVQTYPLCYYG. Residues 302–340 are Cytoplasmic-facing; that stretch reads TMVQESFAELHYAVFCSNWVDQSASYRGHMLILAERTKR. Residues 341–361 form a helical membrane-spanning segment; sequence MQLLLAGNLVPIHLSTYVACW. Over 362–379 the chain is Extracellular; that stretch reads KGAYSFFTLMADRDGLGS.

The protein belongs to the insect chemoreceptor superfamily. Heteromeric odorant receptor channel (TC 1.A.69) family. Or2a subfamily. As to quaternary structure, interacts with Orco. Complexes exist early in the endomembrane system in olfactory sensory neurons (OSNs), coupling these complexes to the conserved ciliary trafficking pathway. As to expression, expressed in 10-40 sensory cells in the third antenna segment and in the maxillary palp.

The protein localises to the cell membrane. Functionally, odorant receptor which mediates acceptance or avoidance behavior, depending on its substrates. The odorant receptor repertoire encodes a large collection of odor stimuli that vary widely in identity, intensity, and duration. May form a complex with Orco to form odorant-sensing units, providing sensitive and prolonged odorant signaling and calcium permeability. The chain is Odorant receptor 23a (Or23a) from Drosophila melanogaster (Fruit fly).